Consider the following 82-residue polypeptide: RNA-binding protein Hfq (82 aa).

One can recognise a Sm domain in the interval 10–70 (DTFLNHVRKN…ISTIMPAQPV (61 aa)).

This sequence belongs to the Hfq family. As to quaternary structure, homohexamer.

RNA chaperone that binds small regulatory RNA (sRNAs) and mRNAs to facilitate mRNA translational regulation in response to envelope stress, environmental stress and changes in metabolite concentrations. Also binds with high specificity to tRNAs. The sequence is that of RNA-binding protein Hfq from Parvibaculum lavamentivorans (strain DS-1 / DSM 13023 / NCIMB 13966).